Consider the following 91-residue polypeptide: UPF0298 protein M28_Spy0318 (91 aa).

This sequence belongs to the UPF0298 family.

It localises to the cytoplasm. The protein is UPF0298 protein M28_Spy0318 of Streptococcus pyogenes serotype M28 (strain MGAS6180).